The following is a 270-amino-acid chain: Electron transfer flavoprotein subunit beta (270 aa).

This sequence belongs to the ETF alpha-subunit/FixB family. As to quaternary structure, heterodimer of an alpha and a beta subunit. It depends on FAD as a cofactor.

In terms of biological role, the electron transfer flavoprotein serves as a specific electron acceptor for other dehydrogenases. It transfers the electrons to the main respiratory chain via ETF-ubiquinone oxidoreductase (ETF dehydrogenase). This Megasphaera elsdenii protein is Electron transfer flavoprotein subunit beta (etfB).